Reading from the N-terminus, the 41-residue chain is Conotoxin Bu22 (41 aa).

A propeptide spanning residues 1 to 25 (SDRASDGRNAAANDRASDLVALTVR) is cleaved from the precursor. 2 cysteine pairs are disulfide-bonded: cysteine 27–cysteine 33 and cysteine 28–cysteine 40.

The protein belongs to the conotoxin A superfamily. Expressed by the venom duct.

It localises to the secreted. The chain is Conotoxin Bu22 from Conus bullatus (Bubble cone).